The primary structure comprises 60 residues: Cytotoxin 3 (60 aa).

Disulfide bonds link Cys3–Cys21, Cys14–Cys38, Cys42–Cys53, and Cys54–Cys59.

This sequence belongs to the three-finger toxin family. Short-chain subfamily. Type IA cytotoxin sub-subfamily. Monomer in solution; Homodimer and oligomer in the presence of negatively charged lipids forming a pore with a size ranging between 20 and 30 Angstroms. In terms of tissue distribution, expressed by the venom gland.

It localises to the secreted. The protein resides in the target cell membrane. In terms of biological role, shows cytolytic activity on many different cells by forming pore in lipid membranes. In vivo, increases heart rate or kills the animal by cardiac arrest. In addition, it binds to heparin with high affinity, interacts with Kv channel-interacting protein 1 (KCNIP1) in a calcium-independent manner, and binds to integrin alpha-V/beta-3 (ITGAV/ITGB3) with moderate affinity. The polypeptide is Cytotoxin 3 (Naja naja (Indian cobra)).